The chain runs to 136 residues: uncharacterized protein (136 aa).

The signal sequence occupies residues 1-19; sequence MMTAAKRLGLYSALRACSA. A helical transmembrane segment spans residues 75-97; that stretch reads FWFSHTCLVFGSNTILFASLNSF.

It localises to the membrane. This is an uncharacterized protein from Saccharomyces cerevisiae (strain ATCC 204508 / S288c) (Baker's yeast).